We begin with the raw amino-acid sequence, 161 residues long: Epithelial membrane protein 2 (161 aa).

Helical transmembrane passes span 1 to 21 (MLVI…LLFI), 67 to 87 (TMIL…LQLF), 95 to 115 (FVFT…GASI), and 137 to 157 (FVVA…YLVL).

Belongs to the PMP-22/EMP/MP20 family. In terms of tissue distribution, expressed in the arches, orbits, pectoral fins, vessels, pronephric renal tubules, and glomeruli.

The protein localises to the golgi apparatus membrane. It localises to the cell membrane. The protein resides in the apical cell membrane. Its subcellular location is the membrane raft. It is found in the cytoplasm. The protein localises to the nucleus. It localises to the perinuclear region. In terms of biological role, functions as a key regulator of cell membrane composition by regulating protein surface expression. Also, plays a role in regulation of processes including cell migration, cell proliferation, cell contraction and cell adhesion. May play a role in glomerular filtration. This Danio rerio (Zebrafish) protein is Epithelial membrane protein 2 (emp2).